The following is a 1180-amino-acid chain: Tudor domain-containing protein 1 (1180 aa).

Disordered stretches follow at residues 1–66 (MSVK…KKNN) and 79–138 (SQED…RPAK). Residues 27–41 (NFEKNENKLPPHESL) are compositionally biased toward basic and acidic residues. 2 stretches are compositionally biased toward polar residues: residues 79 to 91 (SQED…NPNG) and 110 to 122 (NSVS…SNSP). Zn(2+) contacts are provided by C170, C173, C181, C184, C190, C194, H202, and C206. The MYND-type zinc-finger motif lies at 170 to 206 (CHRCGLFGSLRCSQCKQTYYCSTACQRRDWSAHSIVC). The Tudor 1 domain maps to 312-372 (IPVKGEVCIA…YHLNRNIDLF (61 aa)). Residues 450–469 (SGQDSKKENADQSDPEDVGK) form a disordered region. 3 consecutive Tudor domains span residues 541 to 600 (YPAI…LLEL), 762 to 821 (KAEI…FLNL), and 990 to 1048 (RPRI…HLAL).

This sequence belongs to the TDRD1 family. In terms of assembly, found in a mRNP complex, at least composed of TDRD1, TDRD6, TDRD7 and DDX4. Interacts with MAEL. Interacts with PIWIL1, PIWIL2 and PIWIL4 (when methylated on arginine residues). Interacts with TDRD12. As to expression, testis and ovary specific. Also expressed in several cancers.

The protein localises to the cytoplasm. Functionally, plays a central role during spermatogenesis by participating in the repression transposable elements and preventing their mobilization, which is essential for the germline integrity. Acts via the piRNA metabolic process, which mediates the repression of transposable elements during meiosis by forming complexes composed of piRNAs and Piwi proteins and governs the methylation and subsequent repression of transposons. Required for the localization of Piwi proteins to the meiotic nuage. Involved in the piRNA metabolic process by ensuring the entry of correct transcripts into the normal piRNA pool and limiting the entry of cellular transcripts into the piRNA pathway. May act by allowing the recruitment of piRNA biogenesis or loading factors that ensure the correct entry of transcripts and piRNAs into Piwi proteins. This chain is Tudor domain-containing protein 1 (TDRD1), found in Homo sapiens (Human).